Here is a 1013-residue protein sequence, read N- to C-terminus: 2-oxoglutarate dehydrogenase, mitochondrial (1013 aa).

A mitochondrion-targeting transit peptide spans 1–39 (MFTLKQVINKSIQTSMKNGVMSSAVKRSFSTVGGINQPK). Thiamine diphosphate-binding residues include arginine 302, aspartate 403, asparagine 436, isoleucine 438, and glutamine 664. Mg(2+)-binding residues include aspartate 403, asparagine 436, and isoleucine 438.

This sequence belongs to the alpha-ketoglutarate dehydrogenase family. As to quaternary structure, homodimer. Component of the 2-oxoglutarate dehydrogenase complex. The cofactor is thiamine diphosphate. It depends on Mg(2+) as a cofactor.

It is found in the mitochondrion matrix. The catalysed reaction is N(6)-[(R)-lipoyl]-L-lysyl-[protein] + 2-oxoglutarate + H(+) = N(6)-[(R)-S(8)-succinyldihydrolipoyl]-L-lysyl-[protein] + CO2. The 2-oxoglutarate dehydrogenase complex catalyzes the overall conversion of 2-oxoglutarate to succinyl-CoA and CO(2). It contains multiple copies of three enzymatic components: 2-oxoglutarate dehydrogenase (E1), dihydrolipoamide succinyltransferase (E2) and lipoamide dehydrogenase (E3). This Dictyostelium discoideum (Social amoeba) protein is 2-oxoglutarate dehydrogenase, mitochondrial (ogdh).